Consider the following 919-residue polypeptide: Glutamate receptor ionotropic, kainate 3 (919 aa).

Positions 1-31 are cleaved as a signal peptide; sequence MTAPWRRLRSLVWEYWAGLLVCAFWIPDSRG. At 32-563 the chain is on the extracellular side; that stretch reads MPHVIRIGGI…VFSFLNPLSP (532 aa). N-linked (GlcNAc...) asparagine glycosylation is found at Asn70, Asn76, Asn278, Asn381, Asn415, Asn426, and Asn433. Cys99 and Cys350 are joined by a disulfide. 3 residues coordinate L-glutamate: Pro518, Thr520, and Arg525. Asn548 and Asn551 each carry an N-linked (GlcNAc...) asparagine glycan. The helical transmembrane segment at 564–584 threads the bilayer; that stretch reads DIWMYVLLAYLGVSCVLFVIA. Residues 585 to 636 are Cytoplasmic-facing; that stretch reads RFSPYEWYDAHPCNPGSEVVENNFTLLNSFWFGMGSLMQQGSELMPKALSTR. The helical transmembrane segment at 637 to 657 threads the bilayer; that stretch reads IIGGIWWFFTLIIISSYTANL. Residues 658 to 820 are Extracellular-facing; sequence AAFLTVERME…KEASALGIQK (163 aa). 3 residues coordinate L-glutamate: Ala691, Thr692, and Glu739. An N-linked (GlcNAc...) asparagine glycan is attached at Asn752. The helical transmembrane segment at 821–841 threads the bilayer; it reads IGGIFIVLAAGLVLSVLVAVG. Residues 842 to 919 are Cytoplasmic-facing; it reads EFVYKLRKTA…CSTSLAPVFP (78 aa). At Ser869 the chain carries Phosphoserine. Lys887 participates in a covalent cross-link: Glycyl lysine isopeptide (Lys-Gly) (interchain with G-Cter in SUMO1).

Belongs to the glutamate-gated ion channel (TC 1.A.10.1) family. GRIK3 subfamily. In terms of assembly, homotetramer, and heterotetramer with either GRIK4 or GRIK5. Can form functional heteromeric receptors with GRIK2. Interacts with PRKCABP. Interacts with NETO2.

It localises to the cell membrane. The protein localises to the postsynaptic cell membrane. The enzyme catalyses Ca(2+)(in) = Ca(2+)(out). Its function is as follows. Ionotropic glutamate receptor that functions as a cation-permeable ligand-gated ion channel, gated by L-glutamate and the glutamatergic agonist kainic acid. Binding of the excitatory neurotransmitter L-glutamate induces a conformation change, leading to the opening of the cation channel, and thereby converts the chemical signal to an electrical impulse. The receptor then desensitizes rapidly and enters a transient inactive state, characterized by the presence of bound agonist. In association with GRIK2, involved in presynaptic facilitation of glutamate release at hippocampal mossy fiber synapses. The chain is Glutamate receptor ionotropic, kainate 3 (GRIK3) from Homo sapiens (Human).